The primary structure comprises 466 residues: MNNSTYINSSSENVIALESPYKTIEVVFIVLVAGSLSLVTIIGNILVMVSIKVNRHLQTVNNYFLFSLACADLIIGIFSMNLYTLYTVIGYWPLGPVVCDLWLALDYVVSNASVMNLLIISFDRYFCVTKPLTYPVKRTTKMAGMMIAAAWVLSFILWAPAILFWQFIVGGRTVPDKDCYIQFFSNPAVTFGTAIAAFYLPVIIMTVLYWQISRASKSRIKKGKKEAAQNQDPVSPSLVQGKIVKPNNNNIPTSSDGLEHNKVQNGKTTGESVMENCVQGEEKDSSNDSTSVSVVPSNTKEDEAAKDASQISASQDHLKVENSKLTCIRIVTKSQKGDCCAPTNTTVEIVGTNGDEKQNSVARKIVKMTKQPAKKKPPPSREKKVTRTILAILLAFIITWTPYNVMVLINSFCASCIPGTVWTIGYWLCYINSTINPACYALCNATFKKTFKHLLMCHYKNIGATR.

Topologically, residues 1 to 25 (MNNSTYINSSSENVIALESPYKTIE) are extracellular. Asn-2, Asn-3, and Asn-8 each carry an N-linked (GlcNAc...) asparagine glycan. The chain crosses the membrane as a helical span at residues 26-48 (VVFIVLVAGSLSLVTIIGNILVM). At 49–62 (VSIKVNRHLQTVNN) the chain is on the cytoplasmic side. The helical transmembrane segment at 63–83 (YFLFSLACADLIIGIFSMNLY) threads the bilayer. The Extracellular portion of the chain corresponds to 84 to 100 (TLYTVIGYWPLGPVVCD). An intrachain disulfide couples Cys-99 to Cys-179. A helical transmembrane segment spans residues 101-122 (LWLALDYVVSNASVMNLLIISF). The Important for signaling motif lies at 123-125 (DRY). The Cytoplasmic portion of the chain corresponds to 123-142 (DRYFCVTKPLTYPVKRTTKM). A helical membrane pass occupies residues 143-165 (AGMMIAAAWVLSFILWAPAILFW). Residues 166–187 (QFIVGGRTVPDKDCYIQFFSNP) lie on the Extracellular side of the membrane. A helical transmembrane segment spans residues 188–212 (AVTFGTAIAAFYLPVIIMTVLYWQI). Over 213 to 387 (SRASKSRIKK…PPSREKKVTR (175 aa)) the chain is Cytoplasmic. Disordered regions lie at residues 223–265 (GKKE…KVQN) and 279–315 (QGEE…SASQ). 2 stretches are compositionally biased toward polar residues: residues 228 to 238 (AQNQDPVSPSL) and 246 to 256 (PNNNNIPTSSD). Positions 287-298 (NDSTSVSVVPSN) are enriched in low complexity. A helical transmembrane segment spans residues 388–410 (TILAILLAFIITWTPYNVMVLIN). Residues 411–418 (SFCASCIP) are Extracellular-facing. Cys-413 and Cys-416 are joined by a disulfide. The chain crosses the membrane as a helical span at residues 419–442 (GTVWTIGYWLCYINSTINPACYAL). Positions 436 to 440 (NPACY) match the Important for signaling motif. Topologically, residues 443–466 (CNATFKKTFKHLLMCHYKNIGATR) are cytoplasmic. Phosphothreonine occurs at positions 446, 450, and 465.

This sequence belongs to the G-protein coupled receptor 1 family. Muscarinic acetylcholine receptor subfamily. CHRM2 sub-subfamily.

It localises to the cell membrane. Its subcellular location is the postsynaptic cell membrane. Functionally, the muscarinic acetylcholine receptor mediates various cellular responses, including inhibition of adenylate cyclase, breakdown of phosphoinositides and modulation of potassium channels through the action of G proteins. Primary transducing effect is adenylate cyclase inhibition. Signaling promotes phospholipase C activity, leading to the release of inositol trisphosphate (IP3); this then triggers calcium ion release into the cytosol. The chain is Muscarinic acetylcholine receptor M2 (CHRM2) from Gallus gallus (Chicken).